Here is a 153-residue protein sequence, read N- to C-terminus: Endoribonuclease YbeY (153 aa).

Positions 114, 118, and 124 each coordinate Zn(2+).

Belongs to the endoribonuclease YbeY family. The cofactor is Zn(2+).

It is found in the cytoplasm. Functionally, single strand-specific metallo-endoribonuclease involved in late-stage 70S ribosome quality control and in maturation of the 3' terminus of the 16S rRNA. This Shewanella oneidensis (strain ATCC 700550 / JCM 31522 / CIP 106686 / LMG 19005 / NCIMB 14063 / MR-1) protein is Endoribonuclease YbeY.